Reading from the N-terminus, the 1611-residue chain is Pentafunctional AROM polypeptide (1611 aa).

Positions 1–406 (MSQVSGGKVP…VEERASTVSD (406 aa)) are 3-dehydroquinate synthase. NAD(+)-binding positions include 64 to 66 (DTN), 97 to 100 (EESK), 128 to 130 (GGV), and Asp133. Arg144 contacts 7-phospho-2-dehydro-3-deoxy-D-arabino-heptonate. 153-154 (TT) contacts NAD(+). Positions 160 and 166 each coordinate 7-phospho-2-dehydro-3-deoxy-D-arabino-heptonate. Lys175 provides a ligand contact to NAD(+). A 7-phospho-2-dehydro-3-deoxy-D-arabino-heptonate-binding site is contributed by Asn176. Residues 193-196 (WLLT) and Asn204 contribute to the NAD(+) site. Glu208 contributes to the Zn(2+) binding site. 7-phospho-2-dehydro-3-deoxy-D-arabino-heptonate-binding positions include 208-211 (EVIK) and Lys272. Glu282 serves as the catalytic Proton acceptor; for 3-dehydroquinate synthase activity. 7-phospho-2-dehydro-3-deoxy-D-arabino-heptonate-binding positions include 286–290 (RNLVN) and His293. His293 is a binding site for Zn(2+). Residue His297 is the Proton acceptor; for 3-dehydroquinate synthase activity of the active site. 7-phospho-2-dehydro-3-deoxy-D-arabino-heptonate-binding residues include His309 and Lys378. His309 provides a ligand contact to Zn(2+). The tract at residues 419–882 (VRESVSAPRP…WDVLGGPLNV (464 aa)) is EPSP synthase. Cys864 (for EPSP synthase activity) is an active-site residue. The interval 915-1092 (DASIVLIGMR…VPISPAFFLS (178 aa)) is shikimate kinase. 922–929 (GMRASGKS) provides a ligand contact to ATP. A 3-dehydroquinase region spans residues 1093–1309 (LTFPRVQDAW…AAPGQMSVRD (217 aa)). His1212 functions as the Proton acceptor; for 3-dehydroquinate dehydratase activity in the catalytic mechanism. The Schiff-base intermediate with substrate; for 3-dehydroquinate dehydratase activity role is filled by Lys1240. The interval 1322-1611 (KRHFFLFGSP…AAYRAAAASM (290 aa)) is shikimate dehydrogenase.

The protein in the N-terminal section; belongs to the sugar phosphate cyclases superfamily. Dehydroquinate synthase family. It in the 2nd section; belongs to the EPSP synthase family. This sequence in the 3rd section; belongs to the shikimate kinase family. In the 4th section; belongs to the type-I 3-dehydroquinase family. The protein in the C-terminal section; belongs to the shikimate dehydrogenase family. As to quaternary structure, homodimer. The cofactor is Zn(2+).

Its subcellular location is the cytoplasm. The enzyme catalyses 7-phospho-2-dehydro-3-deoxy-D-arabino-heptonate = 3-dehydroquinate + phosphate. It carries out the reaction 3-dehydroquinate = 3-dehydroshikimate + H2O. It catalyses the reaction shikimate + NADP(+) = 3-dehydroshikimate + NADPH + H(+). The catalysed reaction is shikimate + ATP = 3-phosphoshikimate + ADP + H(+). The enzyme catalyses 3-phosphoshikimate + phosphoenolpyruvate = 5-O-(1-carboxyvinyl)-3-phosphoshikimate + phosphate. It functions in the pathway metabolic intermediate biosynthesis; chorismate biosynthesis; chorismate from D-erythrose 4-phosphate and phosphoenolpyruvate: step 2/7. The protein operates within metabolic intermediate biosynthesis; chorismate biosynthesis; chorismate from D-erythrose 4-phosphate and phosphoenolpyruvate: step 3/7. Its pathway is metabolic intermediate biosynthesis; chorismate biosynthesis; chorismate from D-erythrose 4-phosphate and phosphoenolpyruvate: step 4/7. It participates in metabolic intermediate biosynthesis; chorismate biosynthesis; chorismate from D-erythrose 4-phosphate and phosphoenolpyruvate: step 5/7. It functions in the pathway metabolic intermediate biosynthesis; chorismate biosynthesis; chorismate from D-erythrose 4-phosphate and phosphoenolpyruvate: step 6/7. The AROM polypeptide catalyzes 5 consecutive enzymatic reactions in prechorismate polyaromatic amino acid biosynthesis. The chain is Pentafunctional AROM polypeptide from Malassezia globosa (strain ATCC MYA-4612 / CBS 7966) (Dandruff-associated fungus).